A 190-amino-acid chain; its full sequence is Peptidyl-tRNA hydrolase (190 aa).

A tRNA-binding site is contributed by Y18. H23 functions as the Proton acceptor in the catalytic mechanism. The tRNA site is built by F65, N67, and N113.

This sequence belongs to the PTH family. Monomer.

It is found in the cytoplasm. The catalysed reaction is an N-acyl-L-alpha-aminoacyl-tRNA + H2O = an N-acyl-L-amino acid + a tRNA + H(+). Its function is as follows. Hydrolyzes ribosome-free peptidyl-tRNAs (with 1 or more amino acids incorporated), which drop off the ribosome during protein synthesis, or as a result of ribosome stalling. Catalyzes the release of premature peptidyl moieties from peptidyl-tRNA molecules trapped in stalled 50S ribosomal subunits, and thus maintains levels of free tRNAs and 50S ribosomes. This is Peptidyl-tRNA hydrolase from Akkermansia muciniphila (strain ATCC BAA-835 / DSM 22959 / JCM 33894 / BCRC 81048 / CCUG 64013 / CIP 107961 / Muc).